The primary structure comprises 206 residues: Undecaprenyl-diphosphatase (206 aa).

5 helical membrane-spanning segments follow: residues 5-25 (YYWI…LIGG), 53-73 (FLSK…LLIF), 79-99 (IGIT…VSKY), 138-158 (VTLL…EAVL), and 164-184 (VYVG…GSWI).

The protein localises to the cell membrane. It carries out the reaction di-trans,octa-cis-undecaprenyl diphosphate + H2O = di-trans,octa-cis-undecaprenyl phosphate + phosphate + H(+). This chain is Undecaprenyl-diphosphatase (sepP), found in Sulfolobus acidocaldarius (strain ATCC 33909 / DSM 639 / JCM 8929 / NBRC 15157 / NCIMB 11770).